A 353-amino-acid polypeptide reads, in one-letter code: Photosystem II protein D1 (353 aa).

At T2 the chain carries N-acetylthreonine. Position 2 is a phosphothreonine (T2). Transmembrane regions (helical) follow at residues 29–46, 118–133, and 142–156; these read YIGW…TATS, HFLL…EWEL, and WIAV…AATA. H118 provides a ligand contact to chlorophyll a. Y126 lines the pheophytin a pocket. Residues D170 and E189 each contribute to the [CaMn4O5] cluster site. The helical transmembrane segment at 197-218 threads the bilayer; the sequence is FHMLGVAGVFGGSLFSAMHGSL. Position 198 (H198) interacts with chlorophyll a. A quinone-binding positions include H215 and 264-265; that span reads SF. H215 lines the Fe cation pocket. H272 contributes to the Fe cation binding site. A helical membrane pass occupies residues 274–288; sequence FLAAWPVVCIWFTAL. H332, E333, D342, and A344 together coordinate [CaMn4O5] cluster. A propeptide spanning residues 345-353 is cleaved from the precursor; sequence SVDAPAVQG.

The protein belongs to the reaction center PufL/M/PsbA/D family. As to quaternary structure, PSII is composed of 1 copy each of membrane proteins PsbA, PsbB, PsbC, PsbD, PsbE, PsbF, PsbH, PsbI, PsbJ, PsbK, PsbL, PsbM, PsbT, PsbX, PsbY, PsbZ, Psb30/Ycf12, at least 3 peripheral proteins of the oxygen-evolving complex and a large number of cofactors. It forms dimeric complexes. The cofactor is The D1/D2 heterodimer binds P680, chlorophylls that are the primary electron donor of PSII, and subsequent electron acceptors. It shares a non-heme iron and each subunit binds pheophytin, quinone, additional chlorophylls, carotenoids and lipids. D1 provides most of the ligands for the Mn4-Ca-O5 cluster of the oxygen-evolving complex (OEC). There is also a Cl(-1) ion associated with D1 and D2, which is required for oxygen evolution. The PSII complex binds additional chlorophylls, carotenoids and specific lipids.. Tyr-161 forms a radical intermediate that is referred to as redox-active TyrZ, YZ or Y-Z. In terms of processing, C-terminally processed by CTPA; processing is essential to allow assembly of the oxygen-evolving complex and thus photosynthetic growth.

The protein localises to the plastid. It localises to the chloroplast thylakoid membrane. It carries out the reaction 2 a plastoquinone + 4 hnu + 2 H2O = 2 a plastoquinol + O2. In terms of biological role, photosystem II (PSII) is a light-driven water:plastoquinone oxidoreductase that uses light energy to abstract electrons from H(2)O, generating O(2) and a proton gradient subsequently used for ATP formation. It consists of a core antenna complex that captures photons, and an electron transfer chain that converts photonic excitation into a charge separation. The D1/D2 (PsbA/PsbD) reaction center heterodimer binds P680, the primary electron donor of PSII as well as several subsequent electron acceptors. The protein is Photosystem II protein D1 of Nephroselmis olivacea (Green alga).